The primary structure comprises 546 residues: Glutamate--tRNA ligase (546 aa).

Residues Pro42–Asn52 carry the 'HIGH' region motif. Residues Lys293–Arg297 carry the 'KMSKS' region motif. Position 296 (Lys296) interacts with ATP.

Belongs to the class-I aminoacyl-tRNA synthetase family. Glutamate--tRNA ligase type 1 subfamily. As to quaternary structure, monomer.

The protein resides in the cytoplasm. The enzyme catalyses tRNA(Glu) + L-glutamate + ATP = L-glutamyl-tRNA(Glu) + AMP + diphosphate. In terms of biological role, catalyzes the attachment of glutamate to tRNA(Glu) in a two-step reaction: glutamate is first activated by ATP to form Glu-AMP and then transferred to the acceptor end of tRNA(Glu). The protein is Glutamate--tRNA ligase of Acetivibrio thermocellus (strain ATCC 27405 / DSM 1237 / JCM 9322 / NBRC 103400 / NCIMB 10682 / NRRL B-4536 / VPI 7372) (Clostridium thermocellum).